A 441-amino-acid chain; its full sequence is UDP-N-acetylmuramoylalanine--D-glutamate ligase (441 aa).

129–135 lines the ATP pocket; the sequence is GTNGKST.

It belongs to the MurCDEF family.

The protein resides in the cytoplasm. The catalysed reaction is UDP-N-acetyl-alpha-D-muramoyl-L-alanine + D-glutamate + ATP = UDP-N-acetyl-alpha-D-muramoyl-L-alanyl-D-glutamate + ADP + phosphate + H(+). It functions in the pathway cell wall biogenesis; peptidoglycan biosynthesis. Functionally, cell wall formation. Catalyzes the addition of glutamate to the nucleotide precursor UDP-N-acetylmuramoyl-L-alanine (UMA). The polypeptide is UDP-N-acetylmuramoylalanine--D-glutamate ligase (Zymomonas mobilis subsp. mobilis (strain ATCC 31821 / ZM4 / CP4)).